The following is an 827-amino-acid chain: 4-hydroxy-3-methylbut-2-enyl diphosphate reductase (827 aa).

Positions 1–284 (MEIIRAKHMG…MNIEKKVRGI (284 aa)) are 4-hydroxy-3-methylbut-2-enyl diphosphate reductase. Position 12 (cysteine 12) interacts with [4Fe-4S] cluster. 2 residues coordinate (2E)-4-hydroxy-3-methylbut-2-enyl diphosphate: histidine 40 and histidine 79. Dimethylallyl diphosphate contacts are provided by histidine 40 and histidine 79. The isopentenyl diphosphate site is built by histidine 40 and histidine 79. Cysteine 101 provides a ligand contact to [4Fe-4S] cluster. Histidine 129 lines the (2E)-4-hydroxy-3-methylbut-2-enyl diphosphate pocket. Position 129 (histidine 129) interacts with dimethylallyl diphosphate. Histidine 129 is an isopentenyl diphosphate binding site. The Proton donor role is filled by glutamate 131. Position 168 (threonine 168) interacts with (2E)-4-hydroxy-3-methylbut-2-enyl diphosphate. Cysteine 196 is a binding site for [4Fe-4S] cluster. Serine 224, serine 225, asparagine 226, and serine 268 together coordinate (2E)-4-hydroxy-3-methylbut-2-enyl diphosphate. Residues serine 224, serine 225, asparagine 226, and serine 268 each contribute to the dimethylallyl diphosphate site. Serine 224, serine 225, asparagine 226, and serine 268 together coordinate isopentenyl diphosphate. S1 motif domains are found at residues 477–545 (GQIV…LSIK), 562–632 (DDEI…LGIK), 649–716 (DTVI…GSLK), and 733–802 (GTTV…LSIK).

It in the N-terminal section; belongs to the IspH family. Requires [4Fe-4S] cluster as cofactor.

It carries out the reaction isopentenyl diphosphate + 2 oxidized [2Fe-2S]-[ferredoxin] + H2O = (2E)-4-hydroxy-3-methylbut-2-enyl diphosphate + 2 reduced [2Fe-2S]-[ferredoxin] + 2 H(+). The enzyme catalyses dimethylallyl diphosphate + 2 oxidized [2Fe-2S]-[ferredoxin] + H2O = (2E)-4-hydroxy-3-methylbut-2-enyl diphosphate + 2 reduced [2Fe-2S]-[ferredoxin] + 2 H(+). Its pathway is isoprenoid biosynthesis; dimethylallyl diphosphate biosynthesis; dimethylallyl diphosphate from (2E)-4-hydroxy-3-methylbutenyl diphosphate: step 1/1. It functions in the pathway isoprenoid biosynthesis; isopentenyl diphosphate biosynthesis via DXP pathway; isopentenyl diphosphate from 1-deoxy-D-xylulose 5-phosphate: step 6/6. In terms of biological role, catalyzes the conversion of 1-hydroxy-2-methyl-2-(E)-butenyl 4-diphosphate (HMBPP) into a mixture of isopentenyl diphosphate (IPP) and dimethylallyl diphosphate (DMAPP). Acts in the terminal step of the DOXP/MEP pathway for isoprenoid precursor biosynthesis. This Fusobacterium nucleatum subsp. nucleatum (strain ATCC 25586 / DSM 15643 / BCRC 10681 / CIP 101130 / JCM 8532 / KCTC 2640 / LMG 13131 / VPI 4355) protein is 4-hydroxy-3-methylbut-2-enyl diphosphate reductase.